A 360-amino-acid polypeptide reads, in one-letter code: UDP-N-acetylglucosamine--N-acetylmuramyl-(pentapeptide) pyrophosphoryl-undecaprenol N-acetylglucosamine transferase (360 aa).

UDP-N-acetyl-alpha-D-glucosamine-binding positions include 12–14, serine 198, and glutamine 289; that span reads TAG.

The protein belongs to the glycosyltransferase 28 family. MurG subfamily.

It is found in the cell membrane. The catalysed reaction is Mur2Ac(oyl-L-Ala-gamma-D-Glu-L-Lys-D-Ala-D-Ala)-di-trans,octa-cis-undecaprenyl diphosphate + UDP-N-acetyl-alpha-D-glucosamine = beta-D-GlcNAc-(1-&gt;4)-Mur2Ac(oyl-L-Ala-gamma-D-Glu-L-Lys-D-Ala-D-Ala)-di-trans,octa-cis-undecaprenyl diphosphate + UDP + H(+). Its pathway is cell wall biogenesis; peptidoglycan biosynthesis. Functionally, cell wall formation. Catalyzes the transfer of a GlcNAc subunit on undecaprenyl-pyrophosphoryl-MurNAc-pentapeptide (lipid intermediate I) to form undecaprenyl-pyrophosphoryl-MurNAc-(pentapeptide)GlcNAc (lipid intermediate II). The chain is UDP-N-acetylglucosamine--N-acetylmuramyl-(pentapeptide) pyrophosphoryl-undecaprenol N-acetylglucosamine transferase from Streptococcus equi subsp. zooepidemicus (strain MGCS10565).